Reading from the N-terminus, the 457-residue chain is ATP synthase subunit beta (457 aa).

147-154 (GGAGVGKT) is an ATP binding site.

This sequence belongs to the ATPase alpha/beta chains family. F-type ATPases have 2 components, CF(1) - the catalytic core - and CF(0) - the membrane proton channel. CF(1) has five subunits: alpha(3), beta(3), gamma(1), delta(1), epsilon(1). CF(0) has three main subunits: a(1), b(2) and c(9-12). The alpha and beta chains form an alternating ring which encloses part of the gamma chain. CF(1) is attached to CF(0) by a central stalk formed by the gamma and epsilon chains, while a peripheral stalk is formed by the delta and b chains.

The protein localises to the cell inner membrane. It carries out the reaction ATP + H2O + 4 H(+)(in) = ADP + phosphate + 5 H(+)(out). Produces ATP from ADP in the presence of a proton gradient across the membrane. The catalytic sites are hosted primarily by the beta subunits. The chain is ATP synthase subunit beta from Haemophilus influenzae (strain 86-028NP).